The primary structure comprises 302 residues: Galactofuranosyltransferase GlfT1 (302 aa).

The protein belongs to the glycosyltransferase 2 family.

The protein resides in the cell membrane. The protein localises to the secreted. Its subcellular location is the cell wall. It catalyses the reaction alpha-L-rhamnosyl-(1-&gt;3)-N-acetyl-alpha-D-glucosaminyl-diphospho-trans,octa-cis-decaprenol + 2 UDP-alpha-D-galactofuranose = beta-D-galactofuranosyl-(1-&gt;5)-beta-D-galactofuranosyl-(1-&gt;4)-alpha-L-rhamnosyl-(1-&gt;3)-N-acetyl-alpha-D-glucosaminyl-diphospho-trans,octa-cis-decaprenol + 2 UDP + 2 H(+). The protein operates within cell wall biogenesis; cell wall polysaccharide biosynthesis. In terms of biological role, involved in the biosynthesis of the arabinogalactan (AG) region of the mycolylarabinogalactan-peptidoglycan (mAGP) complex, an essential component of the mycobacterial cell wall. Catalyzes the transfer of the first two galactofuranosyl (Galf) units from UDP-galactofuranose (UDP-Galf) onto the rhamnosyl-GlcNAc-diphospho-decaprenol (Rha-GlcNAc-PP-C50) acceptor, yielding galactofuranosyl-galactofuranosyl-rhamnosyl-GlcNAc-diphospho-decaprenol (Galf-Galf-Rha-GlcNAc-PP-C50). Thus, GlfT1 is the initiator of galactan synthesis, while GlfT2 continues with the subsequent polymerization events. The chain is Galactofuranosyltransferase GlfT1 from Mycolicibacterium smegmatis (strain ATCC 700084 / mc(2)155) (Mycobacterium smegmatis).